Consider the following 345-residue polypeptide: Dihydroorotase (345 aa).

Residues histidine 14 and histidine 16 each contribute to the Zn(2+) site. Substrate contacts are provided by residues 16–18 and asparagine 42; that span reads HLR. Residues lysine 100, histidine 137, and histidine 175 each coordinate Zn(2+). Residue lysine 100 is modified to N6-carboxylysine. A substrate-binding site is contributed by histidine 137. Position 220 (leucine 220) interacts with substrate. Aspartate 248 is a Zn(2+) binding site. Aspartate 248 is a catalytic residue. Residues histidine 252 and alanine 264 each contribute to the substrate site.

This sequence belongs to the metallo-dependent hydrolases superfamily. DHOase family. Class II DHOase subfamily. Homodimer. It depends on Zn(2+) as a cofactor.

It carries out the reaction (S)-dihydroorotate + H2O = N-carbamoyl-L-aspartate + H(+). It functions in the pathway pyrimidine metabolism; UMP biosynthesis via de novo pathway; (S)-dihydroorotate from bicarbonate: step 3/3. Its function is as follows. Catalyzes the reversible cyclization of carbamoyl aspartate to dihydroorotate. This Nitrosococcus oceani (strain ATCC 19707 / BCRC 17464 / JCM 30415 / NCIMB 11848 / C-107) protein is Dihydroorotase.